The following is a 424-amino-acid chain: GDP-fucose protein O-fucosyltransferase 2 (424 aa).

The signal sequence occupies residues 1 to 20 (MHFFPIQLLVLFFAEKIAFA). 51–55 (GEGFN) contributes to the GDP-beta-L-fucose binding site. Glu52 acts as the Proton acceptor in catalysis. Residues Cys154 and Cys187 are joined by a disulfide bond. Asn205 carries N-linked (GlcNAc...) asparagine glycosylation. GDP-beta-L-fucose contacts are provided by residues 288 to 290 (HWR), Asp366, and 383 to 384 (TF). Cys407 and Cys414 form a disulfide bridge.

It belongs to the glycosyltransferase 68 family. In terms of tissue distribution, expressed in the anterior part of embryos, in the hypodermal and neuronal cells of the head. Expressed at different levels in a variety of cell types after hatching, including neuronal, hypodermal, muscle, intestinal, and somatic gonadal cells. Expressed in the nerve ring around the pharynx, in dorsal and ventral nerve cords, intestine, and a variety of hypodermal cells of L1-L3 larvae. Expressed in gonadal sheath cells, spermatheca, and tissues surrounding the vulva of adult hermaphrodites, and in the body wall muscle and hypodermal cells of adults of both sexes.

Its subcellular location is the endoplasmic reticulum. The protein localises to the golgi apparatus. It catalyses the reaction L-seryl-[protein] + GDP-beta-L-fucose = 3-O-(alpha-L-fucosyl)-L-seryl-[protein] + GDP + H(+). The enzyme catalyses L-threonyl-[protein] + GDP-beta-L-fucose = 3-O-(alpha-L-fucosyl)-L-threonyl-[protein] + GDP + H(+). The protein operates within protein modification; protein glycosylation. In terms of biological role, catalyzes the reaction that attaches fucose through an O-glycosidic linkage to a conserved serine or threonine residue in the consensus sequence C1-X-X-S/T-C2 of thrombospondin type I repeats (TSRs) where C1 and C2 are the first and second cysteines of the repeat, respectively. O-fucosylates members of several protein families including the ADAMTS superfamily and the thrombospondin (TSP) and spondin families. In Caenorhabditis elegans, this protein is GDP-fucose protein O-fucosyltransferase 2 (pad-2).